Reading from the N-terminus, the 175-residue chain is Disulfide bond formation protein B (175 aa).

The Cytoplasmic segment spans residues 1-13; it reads MTAFTRFAHSRAS. Residues 14–30 traverse the membrane as a helical segment; sequence WLILTGSAIALEAAALY. Over 31 to 48 the chain is Periplasmic; it reads FQYVMKLDPCVMCIYQRL. Cys40 and Cys43 are oxidised to a cystine. The chain crosses the membrane as a helical span at residues 49-64; the sequence is AVFGILAAGLIGMTAP. Residues 65-71 are Cytoplasmic-facing; that stretch reads KYRIVRI. A helical transmembrane segment spans residues 72–89; it reads LGALGWAVSATWGLKLAL. Over 90-144 the chain is Periplasmic; it reads ALVDMQNNPSPFSTCSFLPEFPAWMPLHEWFPSVMLPTGMCTDVPWQFMGVTMAE. A disulfide bond links Cys104 and Cys130. Residues 145–163 form a helical membrane-spanning segment; it reads WMVVAFSGYLVALLLFIVP. Residues 164–175 lie on the Cytoplasmic side of the membrane; sequence ILSGSNKPSLYK.

Belongs to the DsbB family.

It localises to the cell inner membrane. In terms of biological role, required for disulfide bond formation in some periplasmic proteins. Acts by oxidizing the DsbA protein. The chain is Disulfide bond formation protein B from Shewanella sp. (strain MR-4).